The following is a 495-amino-acid chain: MASENTTETPSVPAGGPLAARISRPEGDANPPSTEAEKPAAEDDSGKGPSIPQVDGASEDQRGSELQDSEFDVNVKLSDLQADPNNPLYSIKSFEELGLAEPIQMGLSKMNFRRPSKIQERALPLLMANPPTNMIAQSQSGTGKTAAFVLNILSRLELTPEKQKSPQALVLAPSRELARQIVGVIQAMGTFVEGLFVATAVPMEMNRNQRVEASIVVGTPGTVQDLIKKRLFNTQHLRVLVLDEADNMLDQQGLGDQCIRVKSLLPRTIQVVLFSATFPDFVVRYAHKFAPNSNQLTLKHEELTVEGIKQLYLDCESDEHKYEILVKFYGLLTIGSSIIFVKTRASAAEIERRMVAEGHTVVSLTGGIEGQKRDEIIDRFRNGTAKVLITTNVLARGIDVSTVSMVINYDIPELHLPGAARRMADAQTYLHRIGRTGRFGRVGVAVSFVSNQEEWQMLQDIQKYFSTNIERVDTRDWDDVEKKVKKIIKPSAVAR.

Polar residues predominate over residues 1–10 (MASENTTETP). The disordered stretch occupies residues 1 to 68 (MASENTTETP…EDQRGSELQD (68 aa)). The span at 35–46 (EAEKPAAEDDSG) shows a compositional bias: basic and acidic residues. The Q motif motif lies at 92–120 (KSFEELGLAEPIQMGLSKMNFRRPSKIQE). The region spanning 125-296 (LLMANPPTNM…HKFAPNSNQL (172 aa)) is the Helicase ATP-binding domain. Residue 138–145 (SQSGTGKT) coordinates ATP. Residues 243 to 246 (DEAD) carry the DEAD box motif. One can recognise a Helicase C-terminal domain in the interval 307 to 488 (GIKQLYLDCE…DVEKKVKKII (182 aa)).

This sequence belongs to the DEAD box helicase family. DDX19/DBP5 subfamily. As to quaternary structure, associates with the nuclear pore complex.

The protein resides in the cytoplasm. It is found in the nucleus. Its subcellular location is the nuclear pore complex. It localises to the nucleus membrane. It catalyses the reaction ATP + H2O = ADP + phosphate + H(+). ATP-dependent RNA helicase associated with the nuclear pore complex and essential for mRNA export from the nucleus. May participate in a terminal step of mRNA export through the removal of proteins that accompany mRNA through the nucleopore complex. May also be involved in early transcription. The chain is ATP-dependent RNA helicase DBP5 (DBP5) from Coccidioides immitis (strain RS) (Valley fever fungus).